Consider the following 337-residue polypeptide: Trace amine-associated receptor 5 (337 aa).

Residues 1 to 34 (MRAVFIQGAEEHPAAFCYQVNGSCPRTVHTLGIQ) are Extracellular-facing. Asn-21 is a glycosylation site (N-linked (GlcNAc...) asparagine). Disulfide bonds link Cys-24-Cys-188 and Cys-99-Cys-192. A helical transmembrane segment spans residues 35–55 (LVIYLACAAGMLIIVLGNLFV). At 56–70 (AFAVSYFKALHTPTN) the chain is on the cytoplasmic side. A helical transmembrane segment spans residues 71–91 (FLLLSLALADMFLGLLVLPLS). The Extracellular segment spans residues 92-109 (TIRSVESCWFFGDFLCRL). Residues 110-130 (HTYLDPLFCLTSIFHLCFISI) traverse the membrane as a helical segment. Residues 131 to 154 (DRHCAICDPLLYPSKFTVRVALRY) lie on the Cytoplasmic side of the membrane. The helical transmembrane segment at 155-175 (ILAGWGVPAAYTSLFLYTDVV) threads the bilayer. An extracellular Loop 2 (ECL2) region spans residues 176-189 (ETRLSQWLEEMPCV). The Extracellular portion of the chain corresponds to 176 to 204 (ETRLSQWLEEMPCVGSCQLLLNKFWGWLN). A helical transmembrane segment spans residues 205–225 (FPLFFVPCLIMISLYVKIFVV). Over 226-253 (ATRQAQQITTLSKNLAGAAKHDRKAAKT) the chain is Cytoplasmic. Residues 254 to 274 (LGIAVGIYLLCWLPFTIDTMV) form a helical membrane-spanning segment. Residues 275 to 284 (DSLLHFITPP) lie on the Extracellular side of the membrane. The chain crosses the membrane as a helical span at residues 285–307 (LVFDIFIWFAYFNSACNPIIYVF). The Cytoplasmic segment spans residues 308–337 (SYQWFRKALKLTLSQKVFSPQTRTVDLYQE).

This sequence belongs to the G-protein coupled receptor 1 family.

It is found in the cell membrane. In terms of biological role, olfactory receptor specific for trimethylamine, a trace amine. Trimethylamine is a bacterial metabolite found in some animal odors. Trimethylamine-binding causes a conformation change that triggers signaling via G(s)-class of G alpha proteins (GNAL or GNAS). This is Trace amine-associated receptor 5 (TAAR5) from Pan troglodytes (Chimpanzee).